A 673-amino-acid polypeptide reads, in one-letter code: Pesticin receptor (673 aa).

The first 22 residues, 1–22, serve as a signal peptide directing secretion; the sequence is MKMTRLYPLALGGLLLPAIANA. The TonB box signature appears at 30 to 37; sequence STLEVTAS. The TBDR plug domain occupies 41-155; the sequence is SRSASANNVS…QGGIINIVTQ (115 aa). In terms of domain architecture, TBDR beta-barrel spans 160–672; sequence TPRGYIEGGV…TVGINTRIDF (513 aa). Residues 657-673 carry the TonB C-terminal box motif; it reads QVNMGRTVGINTRIDFF.

It belongs to the TonB-dependent receptor family.

It is found in the cell outer membrane. Functionally, receptor for the bacteriocin pesticin and for the siderophore yersiniabactin. In Yersinia enterocolitica, this protein is Pesticin receptor (fyuA).